The chain runs to 151 residues: Differentiation-associated protein 2 (151 aa).

Positions 1-22 (MKQIIRLITTLLLLSLIGITCA) are cleaved as a signal peptide.

It is found in the endoplasmic reticulum. It localises to the vacuole. In terms of biological role, has an essential role in the initiation of differentiation. Also required for cAMP signaling. This chain is Differentiation-associated protein 2 (dia2), found in Dictyostelium discoideum (Social amoeba).